The primary structure comprises 311 residues: tRNA-cytidine(32) 2-sulfurtransferase (311 aa).

Residues 47 to 52 carry the PP-loop motif motif; sequence SGGKDS. 3 residues coordinate [4Fe-4S] cluster: Cys-122, Cys-125, and Cys-213.

The protein belongs to the TtcA family. As to quaternary structure, homodimer. Mg(2+) is required as a cofactor. The cofactor is [4Fe-4S] cluster.

Its subcellular location is the cytoplasm. The enzyme catalyses cytidine(32) in tRNA + S-sulfanyl-L-cysteinyl-[cysteine desulfurase] + AH2 + ATP = 2-thiocytidine(32) in tRNA + L-cysteinyl-[cysteine desulfurase] + A + AMP + diphosphate + H(+). The protein operates within tRNA modification. Functionally, catalyzes the ATP-dependent 2-thiolation of cytidine in position 32 of tRNA, to form 2-thiocytidine (s(2)C32). The sulfur atoms are provided by the cysteine/cysteine desulfurase (IscS) system. The sequence is that of tRNA-cytidine(32) 2-sulfurtransferase from Salmonella heidelberg (strain SL476).